A 318-amino-acid chain; its full sequence is Type II methyltransferase M.HaeII (318 aa).

The SAM-dependent MTase C5-type domain maps to 4 to 304; it reads YKTIDLFAGI…GSMINSLNMA (301 aa). Residue C73 is part of the active site.

It belongs to the class I-like SAM-binding methyltransferase superfamily. C5-methyltransferase family.

The enzyme catalyses a 2'-deoxycytidine in DNA + S-adenosyl-L-methionine = a 5-methyl-2'-deoxycytidine in DNA + S-adenosyl-L-homocysteine + H(+). A methylase, recognizes the double-stranded sequence 5'-RGCGCY-3', methylates C-? on both strands, and protects the DNA from cleavage by the HaeII endonuclease. The polypeptide is Type II methyltransferase M.HaeII (haeIIM) (Haemophilus aegyptius).